The sequence spans 200 residues: Somatotropin (200 aa).

The N-terminal stretch at 1-22 is a signal peptide; it reads MARVLVVLSVVVASLFFSQGAT. A Zn(2+)-binding site is contributed by His38. Cys71 and Cys173 are joined by a disulfide. A Zn(2+)-binding site is contributed by Glu182. Residues Cys190 and Cys198 are joined by a disulfide bond.

Belongs to the somatotropin/prolactin family.

The protein resides in the secreted. In terms of biological role, growth hormone plays an important role in growth control and is involved in the regulation of several anabolic processes. Implicated as an osmoregulatory substance important for seawater adaptation. This chain is Somatotropin (gh), found in Heteropneustes fossilis (Stinging catfish).